Consider the following 637-residue polypeptide: 1-deoxy-D-xylulose-5-phosphate synthase (637 aa).

Residues His-73 and 113–115 each bind thiamine diphosphate; that span reads SHA. Asp-144 contacts Mg(2+). Residues 145-146, Asn-174, Tyr-285, and Glu-366 contribute to the thiamine diphosphate site; that span reads GA. Asn-174 serves as a coordination point for Mg(2+).

Belongs to the transketolase family. DXPS subfamily. In terms of assembly, homodimer. Mg(2+) is required as a cofactor. Requires thiamine diphosphate as cofactor.

The enzyme catalyses D-glyceraldehyde 3-phosphate + pyruvate + H(+) = 1-deoxy-D-xylulose 5-phosphate + CO2. It participates in metabolic intermediate biosynthesis; 1-deoxy-D-xylulose 5-phosphate biosynthesis; 1-deoxy-D-xylulose 5-phosphate from D-glyceraldehyde 3-phosphate and pyruvate: step 1/1. Functionally, catalyzes the acyloin condensation reaction between C atoms 2 and 3 of pyruvate and glyceraldehyde 3-phosphate to yield 1-deoxy-D-xylulose-5-phosphate (DXP). The chain is 1-deoxy-D-xylulose-5-phosphate synthase from Streptomyces griseus subsp. griseus (strain JCM 4626 / CBS 651.72 / NBRC 13350 / KCC S-0626 / ISP 5235).